The chain runs to 101 residues: Large ribosomal subunit protein bL27 (101 aa).

The propeptide occupies 1–9; it reads MLLMNLQLF.

The protein belongs to the bacterial ribosomal protein bL27 family. The N-terminus is cleaved by ribosomal processing cysteine protease Prp.

This chain is Large ribosomal subunit protein bL27, found in Clostridium tetani (strain Massachusetts / E88).